Here is a 156-residue protein sequence, read N- to C-terminus: MRSSAKQEELVKAFKALLKEEKFSSQGEIVAALQEQGFDNINQSKVSRMLTKFGAVRTRNAKMEMVYCLPAELGVPTTSSPLKNLVLDIDYNDAVVVIHTSPGAAQLIARLLDSLGKAEGILGTIAGDDTIFTTPANGFTVKELYEAILELFDQEL.

It belongs to the ArgR family.

The protein localises to the cytoplasm. It participates in amino-acid biosynthesis; L-arginine biosynthesis [regulation]. In terms of biological role, regulates arginine biosynthesis genes. This chain is Arginine repressor, found in Escherichia coli O81 (strain ED1a).